The primary structure comprises 188 residues: Peptidyl-tRNA hydrolase (188 aa).

Phe-15 provides a ligand contact to tRNA. The Proton acceptor role is filled by His-20. Residues Tyr-64, Asn-66, and Asn-112 each contribute to the tRNA site.

Belongs to the PTH family. Monomer.

It localises to the cytoplasm. It catalyses the reaction an N-acyl-L-alpha-aminoacyl-tRNA + H2O = an N-acyl-L-amino acid + a tRNA + H(+). Hydrolyzes ribosome-free peptidyl-tRNAs (with 1 or more amino acids incorporated), which drop off the ribosome during protein synthesis, or as a result of ribosome stalling. Functionally, catalyzes the release of premature peptidyl moieties from peptidyl-tRNA molecules trapped in stalled 50S ribosomal subunits, and thus maintains levels of free tRNAs and 50S ribosomes. In Borrelia recurrentis (strain A1), this protein is Peptidyl-tRNA hydrolase.